The chain runs to 306 residues: TnpB-like protein aq_aa05 (306 aa).

Zn(2+)-binding residues include C213, C216, C234, and C237.

This sequence belongs to the transposase 35 family.

The sequence is that of TnpB-like protein aq_aa05 from Aquifex aeolicus (strain VF5).